The primary structure comprises 456 residues: Neurexin-3-beta (456 aa).

The signal sequence occupies residues M1 to S35. Topologically, residues S36 to T381 are extracellular. The disordered stretch occupies residues S41 to S63. Positions H52–S63 are enriched in basic residues. Residues A82–V282 enclose the Laminin G-like domain. The Ca(2+) site is built by D134 and I151. A glycan (N-linked (GlcNAc...) asparagine) is linked at N181. The Ca(2+) site is built by I233 and N235. 2 N-linked (GlcNAc...) asparagine glycosylation sites follow: N279 and N323. A disordered region spans residues A316–A340. A compositionally biased stretch (polar residues) spans S325 to A340. O-linked (Xyl...) (heparan sulfate) serine glycosylation occurs at S339. The helical transmembrane segment at G382–M402 threads the bilayer. Topologically, residues Y403–V456 are cytoplasmic. A disordered region spans residues N424 to V456.

This sequence belongs to the neurexin family. Weakly interacts with CBLN1 and CBLN2. Very weak binding, if any, to CBLN4. Specific isoforms bind neuroligins NLGN1, NLGN2 and NLGN3. Interacts with CLSTN3. In terms of processing, processed by alpha-secretase leading to the formation of an extracellular soluble protein as well as a C-terminal membrane-embedded fragment (CTF). Proteolysis of these CTFs by gamma-secretase releases intracellular domains (ICDs) and extracellular peptides. Post-translationally, O-glycosylated; contains heparan sulfate. Heparan sulfate attachment is required for synapse development by mediating interactions with neuroligins.

Its subcellular location is the presynaptic cell membrane. The protein resides in the secreted. Functionally, neuronal cell surface protein that may be involved in cell recognition and cell adhesion. May mediate intracellular signaling. Functions as part of a trans-synaptic complex by binding to cerebellins and postsynaptic GRID1. This interaction helps regulate the activity of NMDA and AMPA receptors at hippocampal synapses without affecting synapse formation. NRXN3B-CBLN2-GRID1 complex transduce presynaptic signals into postsynaptic AMPAR response. In Bos taurus (Bovine), this protein is Neurexin-3-beta (NRXN3).